Reading from the N-terminus, the 89-residue chain is Antimicrobial peptide Ar-AMP (89 aa).

Positions 1-25 (MVNMKSVALIVIVMMAFMMVDPSMG) are cleaved as a signal peptide. The Chitin-binding type-1 domain maps to 26–68 (AGECVQGRCPSGMCCSQFGYCGRGPKYCGRASTTVDHQADAAA). Intrachain disulfides connect C29–C40, C34–C46, and C39–C53. Positions 56-89 (ASTTVDHQADAAAAAATKTANNPTDAKLAGAGSP) are cleaved as a propeptide — removed in mature form.

In terms of biological role, chitin-binding protein that inhibits the growth of the fungal pathogens B.cinerea, F.culmorum, H.sativum and A.consortiale, but not that of R.solani. Induces morphological changes in the fungal pathogens F.culmorum, H.sativum and R.solani, but not in A.consortiale and B.cinerea. Has antibacterial activity against the Gram-positive bacterium B.subtilis, but lacks antibacterial activity against the Gram-negative bacterium E.coli. In Amaranthus retroflexus (Redroot amaranth), this protein is Antimicrobial peptide Ar-AMP.